The chain runs to 190 residues: Shikimate kinase (190 aa).

An ATP-binding site is contributed by 14–19 (GAGKST). Residue Ser18 participates in Mg(2+) binding. Residues Asp36, Arg60, and Gly82 each contribute to the substrate site. Arg120 serves as a coordination point for ATP. Arg139 lines the substrate pocket.

This sequence belongs to the shikimate kinase family. As to quaternary structure, monomer. Requires Mg(2+) as cofactor.

It localises to the cytoplasm. It carries out the reaction shikimate + ATP = 3-phosphoshikimate + ADP + H(+). It participates in metabolic intermediate biosynthesis; chorismate biosynthesis; chorismate from D-erythrose 4-phosphate and phosphoenolpyruvate: step 5/7. Its function is as follows. Catalyzes the specific phosphorylation of the 3-hydroxyl group of shikimic acid using ATP as a cosubstrate. The chain is Shikimate kinase from Thioalkalivibrio sulfidiphilus (strain HL-EbGR7).